Reading from the N-terminus, the 214-residue chain is uncharacterized protein (214 aa).

It belongs to the uracil-DNA glycosylase (UDG) superfamily.

This is an uncharacterized protein from Haemophilus influenzae (strain ATCC 51907 / DSM 11121 / KW20 / Rd).